Here is a 172-residue protein sequence, read N- to C-terminus: Adenine phosphoribosyltransferase (172 aa).

It belongs to the purine/pyrimidine phosphoribosyltransferase family. In terms of assembly, homodimer.

The protein localises to the cytoplasm. The catalysed reaction is AMP + diphosphate = 5-phospho-alpha-D-ribose 1-diphosphate + adenine. Its pathway is purine metabolism; AMP biosynthesis via salvage pathway; AMP from adenine: step 1/1. Catalyzes a salvage reaction resulting in the formation of AMP, that is energically less costly than de novo synthesis. The chain is Adenine phosphoribosyltransferase from Streptococcus pyogenes serotype M5 (strain Manfredo).